Reading from the N-terminus, the 296-residue chain is MAELVLKTDFPDLKLAGRGKVRDIYDLGDALLIVTTDRISAFDVIMNEAIPDKGYVLTQISSFWFRQMEDIIPNHIISTDVKDFPAECQKYAAQLEGRSMLVKKAKPLPVECIVRGYISGSGWKDYKATGAICGITLPAGLVESDKLEEPIFTPSTKAELGEHDENISFDKCVELIGRELAEKIRDVTIAIYKRARDIADTKGIIIADTKFEYGIYNGELIIIDECMTPDSSRFWPKDSYKPGGAQPSFDKQFLRDYLETLDWGKTAPAPPLPEEIVRKTGEKYMEALVRLTGKGK.

Belongs to the SAICAR synthetase family.

It catalyses the reaction 5-amino-1-(5-phospho-D-ribosyl)imidazole-4-carboxylate + L-aspartate + ATP = (2S)-2-[5-amino-1-(5-phospho-beta-D-ribosyl)imidazole-4-carboxamido]succinate + ADP + phosphate + 2 H(+). It participates in purine metabolism; IMP biosynthesis via de novo pathway; 5-amino-1-(5-phospho-D-ribosyl)imidazole-4-carboxamide from 5-amino-1-(5-phospho-D-ribosyl)imidazole-4-carboxylate: step 1/2. The protein is Phosphoribosylaminoimidazole-succinocarboxamide synthase of Geobacter sulfurreducens (strain ATCC 51573 / DSM 12127 / PCA).